Here is a 447-residue protein sequence, read N- to C-terminus: Methionine aminopeptidase 2-2 (447 aa).

Residues 1–89 (MAAQTAPELA…PRIPLTTLFP (89 aa)) form a disordered region. Over residues 15–30 (NKNSGSAEANVVSNGG) the composition is skewed to polar residues. The span at 34–47 (DDAENEGDSDDDKD) shows a compositional bias: acidic residues. The segment covering 59–73 (KKKKKKRSKKKKKAA) has biased composition (basic residues). Histidine 197 serves as a coordination point for substrate. A divalent metal cation is bound by residues aspartate 217, aspartate 228, and histidine 297. Position 305 (histidine 305) interacts with substrate. Glutamate 333 and glutamate 428 together coordinate a divalent metal cation.

This sequence belongs to the peptidase M24A family. Methionine aminopeptidase eukaryotic type 2 subfamily. Co(2+) serves as cofactor. The cofactor is Zn(2+). Requires Mn(2+) as cofactor. Fe(2+) is required as a cofactor.

The protein localises to the cytoplasm. It carries out the reaction Release of N-terminal amino acids, preferentially methionine, from peptides and arylamides.. In terms of biological role, cotranslationally removes the N-terminal methionine from nascent proteins. The N-terminal methionine is often cleaved when the second residue in the primary sequence is small and uncharged (Met-Ala-, Cys, Gly, Pro, Ser, Thr, or Val). This is Methionine aminopeptidase 2-2 from Arthroderma otae (strain ATCC MYA-4605 / CBS 113480) (Microsporum canis).